We begin with the raw amino-acid sequence, 163 residues long: Cell division protein SepF (163 aa).

Positions 25 to 53 (SVAPHSGEERESAFSRRSAERAERTERPT) are disordered. Basic and acidic residues predominate over residues 30–51 (SGEERESAFSRRSAERAERTER).

Belongs to the SepF family. As to quaternary structure, homodimer. Interacts with FtsZ.

Its subcellular location is the cytoplasm. Functionally, cell division protein that is part of the divisome complex and is recruited early to the Z-ring. Probably stimulates Z-ring formation, perhaps through the cross-linking of FtsZ protofilaments. Its function overlaps with FtsA. This chain is Cell division protein SepF, found in Heliobacterium modesticaldum (strain ATCC 51547 / Ice1).